Reading from the N-terminus, the 477-residue chain is Aspartyl/glutamyl-tRNA(Asn/Gln) amidotransferase subunit B (477 aa).

This sequence belongs to the GatB/GatE family. GatB subfamily. As to quaternary structure, heterotrimer of A, B and C subunits.

It carries out the reaction L-glutamyl-tRNA(Gln) + L-glutamine + ATP + H2O = L-glutaminyl-tRNA(Gln) + L-glutamate + ADP + phosphate + H(+). The catalysed reaction is L-aspartyl-tRNA(Asn) + L-glutamine + ATP + H2O = L-asparaginyl-tRNA(Asn) + L-glutamate + ADP + phosphate + 2 H(+). Its function is as follows. Allows the formation of correctly charged Asn-tRNA(Asn) or Gln-tRNA(Gln) through the transamidation of misacylated Asp-tRNA(Asn) or Glu-tRNA(Gln) in organisms which lack either or both of asparaginyl-tRNA or glutaminyl-tRNA synthetases. The reaction takes place in the presence of glutamine and ATP through an activated phospho-Asp-tRNA(Asn) or phospho-Glu-tRNA(Gln). This Ligilactobacillus salivarius (strain UCC118) (Lactobacillus salivarius) protein is Aspartyl/glutamyl-tRNA(Asn/Gln) amidotransferase subunit B.